The following is a 137-amino-acid chain: Large ribosomal subunit protein uL16 (137 aa).

This sequence belongs to the universal ribosomal protein uL16 family. As to quaternary structure, part of the 50S ribosomal subunit.

Functionally, binds 23S rRNA and is also seen to make contacts with the A and possibly P site tRNAs. This is Large ribosomal subunit protein uL16 from Streptococcus thermophilus (strain ATCC BAA-491 / LMD-9).